Consider the following 128-residue polypeptide: uncharacterized protein (128 aa).

The interval 1 to 26 (MNSATSETTTNTGAAETTTSTGAAET) is disordered. Residues 105-127 (IANGLLTNNGISVFISTVLLAIV) form a helical membrane-spanning segment.

It belongs to the flocculin family.

The protein localises to the membrane. This is an uncharacterized protein from Saccharomyces cerevisiae (strain ATCC 204508 / S288c) (Baker's yeast).